Here is a 536-residue protein sequence, read N- to C-terminus: Apolipoprotein N-acyltransferase (536 aa).

6 consecutive transmembrane segments (helical) span residues 34 to 54 (PLWW…RPGA), 64 to 84 (ALIG…WLFI), 89 to 109 (YGAL…AFLA), 129 to 149 (GAAL…GSLW), 172 to 192 (YVGV…CVQW), and 199 to 219 (HWPM…AAVQ). The 244-residue stretch at 244-487 (LQGNIAQDEK…RGVLRGQVHG (244 aa)) folds into the CN hydrolase domain. Glu-283 (proton acceptor) is an active-site residue. The active site involves Lys-345. Cys-395 serves as the catalytic Nucleophile. A helical transmembrane segment spans residues 503–523 (WWVARWGLWPLWALAALALAW).

It belongs to the CN hydrolase family. Apolipoprotein N-acyltransferase subfamily.

It is found in the cell inner membrane. The enzyme catalyses N-terminal S-1,2-diacyl-sn-glyceryl-L-cysteinyl-[lipoprotein] + a glycerophospholipid = N-acyl-S-1,2-diacyl-sn-glyceryl-L-cysteinyl-[lipoprotein] + a 2-acyl-sn-glycero-3-phospholipid + H(+). It functions in the pathway protein modification; lipoprotein biosynthesis (N-acyl transfer). Functionally, catalyzes the phospholipid dependent N-acylation of the N-terminal cysteine of apolipoprotein, the last step in lipoprotein maturation. This is Apolipoprotein N-acyltransferase from Verminephrobacter eiseniae (strain EF01-2).